Consider the following 483-residue polypeptide: GTPase Der (483 aa).

EngA-type G domains lie at 3–167 and 212–387; these read FTLA…GEER and LRIA…EIWN. GTP-binding positions include 9-16, 56-60, 119-122, 218-225, 265-269, and 330-333; these read GRPNVGKS, DTAGL, NKAE, GRPNAGKS, DTAGM, and NKWD. The KH-like domain maps to 388–472; it reads RRISTGRLNR…PIRLSLRTSD (85 aa).

It belongs to the TRAFAC class TrmE-Era-EngA-EngB-Septin-like GTPase superfamily. EngA (Der) GTPase family. Associates with the 50S ribosomal subunit.

In terms of biological role, GTPase that plays an essential role in the late steps of ribosome biogenesis. In Brucella suis biovar 1 (strain 1330), this protein is GTPase Der.